Reading from the N-terminus, the 267-residue chain is Thiamine pyrophosphokinase 3 (267 aa).

Belongs to the thiamine pyrophosphokinase family.

The protein localises to the cytoplasm. Its subcellular location is the cytosol. The enzyme catalyses thiamine + ATP = thiamine diphosphate + AMP + H(+). Its pathway is cofactor biosynthesis; thiamine diphosphate biosynthesis; thiamine diphosphate from thiamine: step 1/1. Its function is as follows. Catalyzes the phosphorylation of thiamine to thiamine pyrophosphate (TPP). TPP is an active cofactor for enzymes involved in glycolysis and energy production. Plant leaves require high levels of TPP for photosynthesis and carbohydrate metabolism. The protein is Thiamine pyrophosphokinase 3 (TPK3) of Oryza sativa subsp. japonica (Rice).